Here is a 644-residue protein sequence, read N- to C-terminus: MFQDNPLLAQLKQQLHSQTPRAEGVVKATEKGFGFLEVDAQKSYFIPPPQMKKVMHGDRIVAVIHTEKERESAEPEELIEPFLTRFVGKVQGKNDRLSIVPDHPLLKDAIPCRAARGVQHEFKEGDWAVAEMRRHPLKGDRSFYADLTQYITFADDHFVPWWVTLARHNLEKEAPNGVATEMLDEGLERQDLTALNFVTIDSASTEDMDDALYAEELADGRLQLTVAIADPTAWIAEGSKLDNAAKIRAFTNYLPGFNIPMLPRELSDDLCSLRANEVRPALACRMIIAADGTIDDDIAFFAATIESKAKLVYDNVSDWLENNGTWQPENEGIAQQIRLLHRICLSRSEWRHHHALVFKDRPDYRFVLGEKGEVLDIVAEPRRIANRIVEESMIAANLCAARVLRDKLGFGIYNVHTGFDPANADALAALLKTHGLHVDAEEVLTLEGFCKLRRELDAQPSGFLDSRIRRFQSFAEISTEPGPHFGLGLEAYATWTSPIRKYGDMINHRLLKAVIKGEAIARPQEDITQQMAERRRLNRMAERDVGDWLYARFLNDKAGTNTRFAAEIIDVSRGGMRVRLVDNGAIAFIPAPFLHAVRDELVCSQENGTVQIKGETVYKVTDVIDVTIAEVRMETRSIIARPAA.

One can recognise an RNB domain in the interval 189–516 (RQDLTALNFV…NHRLLKAVIK (328 aa)). An S1 motif domain is found at 561–643 (NTRFAAEIID…ETRSIIARPA (83 aa)).

This sequence belongs to the RNR ribonuclease family. RNase II subfamily.

The protein localises to the cytoplasm. The catalysed reaction is Exonucleolytic cleavage in the 3'- to 5'-direction to yield nucleoside 5'-phosphates.. Its function is as follows. Involved in mRNA degradation. Hydrolyzes single-stranded polyribonucleotides processively in the 3' to 5' direction. This is Exoribonuclease 2 from Salmonella paratyphi A (strain ATCC 9150 / SARB42).